Reading from the N-terminus, the 142-residue chain is Large ribosomal subunit protein mL42 (142 aa).

The transit peptide at 1–31 directs the protein to the mitochondrion; sequence MAAAVKWAISNRTIWKHLLPIQNGALSSACH.

The protein belongs to the mitochondrion-specific ribosomal protein mL42 family. In terms of assembly, component of the mitochondrial ribosome large subunit (39S) which comprises a 16S rRNA and about 50 distinct proteins. Component of the mitochondrial ribosome small subunit (28S) which comprises a 12S rRNA and about 30 distinct proteins.

It is found in the mitochondrion. In Mus musculus (Mouse), this protein is Large ribosomal subunit protein mL42 (Mrpl42).